A 415-amino-acid polypeptide reads, in one-letter code: Sucrose permease (415 aa).

Topologically, residues 1–16 are cytoplasmic; the sequence is MALNIPFRNAYYRFAS. A helical membrane pass occupies residues 17–37; sequence SYSFLFFISWSLWWSLYAIWL. Residues 38–48 lie on the Periplasmic side of the membrane; the sequence is KGHLGLTGTEL. Residues 49–69 traverse the membrane as a helical segment; the sequence is GTLYSVNQFTSILFMMFYGIV. At 70-77 the chain is on the cytoplasmic side; that stretch reads QDKLGLKK. The chain crosses the membrane as a helical span at residues 78-98; that stretch reads PLIWCMSFILVLTGPFMIYVY. Residues 99–107 are Periplasmic-facing; the sequence is EPLLQSNFS. The helical transmembrane segment at 108–128 threads the bilayer; the sequence is VGLILGALFFGLGYLAGCGLL. The Cytoplasmic segment spans residues 129-147; it reads DSFTEKMARNFHFEYGTAR. A helical transmembrane segment spans residues 148–167; it reads AWGSFGYAIGAFFAGIFFSI. The Periplasmic segment spans residues 168–170; that stretch reads SPH. The chain crosses the membrane as a helical span at residues 171–190; that stretch reads INFWLVSLFGAVFMMINMRF. The Cytoplasmic segment spans residues 191–220; the sequence is KDKDHQCIAADAGGVKKEDFIAVFKDRNFW. The chain crosses the membrane as a helical span at residues 221–241; that stretch reads VFVIFIVGTWSFYNIFDQQLF. The Periplasmic portion of the chain corresponds to 242-260; it reads PVFYAGLFESHDVGTRLYG. Residues 261 to 281 traverse the membrane as a helical segment; sequence YLNSFQVVLEALCMAIIPFFV. Over 282–287 the chain is Cytoplasmic; it reads NRVGPK. The chain crosses the membrane as a helical span at residues 288-308; that stretch reads NALLIGVVIMALRILSCALFV. The Periplasmic segment spans residues 309-311; that stretch reads NPW. The helical transmembrane segment at 312–332 threads the bilayer; the sequence is IISLVKLLHAIEVPLCVISVF. Topologically, residues 333–342 are cytoplasmic; that stretch reads KYSVANFDKR. A helical membrane pass occupies residues 343 to 363; the sequence is LSSTIFLIGFQIASSLGIVLL. Residues 364–377 lie on the Periplasmic side of the membrane; the sequence is STPTGILFDHAGYQ. Residues 378-398 traverse the membrane as a helical segment; sequence TVFFAISGIVCLMLLFGIFFL. At 399–415 the chain is on the cytoplasmic side; that stretch reads SKKREQIVMETPVPSAI.

The protein belongs to the major facilitator superfamily. Oligosaccharide:H(+) symporter (OHS) (TC 2.A.1.5) family.

It is found in the cell inner membrane. Its pathway is glycan biosynthesis; sucrose metabolism. Responsible for transport of sucrose into the cell, with the concomitant import of a proton (symport system). Can also transport maltose, fructose or lactulose, but not glucose, lactose or melibiose. The substrate specificity is directed toward the fructofuranosyl moiety of the substrate. This is Sucrose permease from Escherichia coli.